The sequence spans 193 residues: MIGRIAGTLIEKNPPHLLVDCHGVGYEIDVPMSTFYNLPATGEKVVLLTQQIVREDAHLLYGFGTAAERETFRQLIKISGIGARIALAVLSGMSVAELAQAVTLQEAGRLTRIPGIGKKTAERLLLELKGKLGADLGTVPGGPAVSDDAVDVLNALLALGYSDKEAALAIKQVPAGTGVSEGIKLALKALSKG.

The tract at residues 1 to 64 (MIGRIAGTLI…EDAHLLYGFG (64 aa)) is domain I. Residues 65 to 143 (TAAERETFRQ…ADLGTVPGGP (79 aa)) form a domain II region. The segment at 144–151 (AVSDDAVD) is flexible linker. The segment at 151–193 (DVLNALLALGYSDKEAALAIKQVPAGTGVSEGIKLALKALSKG) is domain III.

Belongs to the RuvA family. As to quaternary structure, homotetramer. Forms an RuvA(8)-RuvB(12)-Holliday junction (HJ) complex. HJ DNA is sandwiched between 2 RuvA tetramers; dsDNA enters through RuvA and exits via RuvB. An RuvB hexamer assembles on each DNA strand where it exits the tetramer. Each RuvB hexamer is contacted by two RuvA subunits (via domain III) on 2 adjacent RuvB subunits; this complex drives branch migration. In the full resolvosome a probable DNA-RuvA(4)-RuvB(12)-RuvC(2) complex forms which resolves the HJ.

The protein resides in the cytoplasm. In terms of biological role, the RuvA-RuvB-RuvC complex processes Holliday junction (HJ) DNA during genetic recombination and DNA repair, while the RuvA-RuvB complex plays an important role in the rescue of blocked DNA replication forks via replication fork reversal (RFR). RuvA specifically binds to HJ cruciform DNA, conferring on it an open structure. The RuvB hexamer acts as an ATP-dependent pump, pulling dsDNA into and through the RuvAB complex. HJ branch migration allows RuvC to scan DNA until it finds its consensus sequence, where it cleaves and resolves the cruciform DNA. In Ralstonia pickettii (strain 12J), this protein is Holliday junction branch migration complex subunit RuvA.